Consider the following 232-residue polypeptide: Methylthioribulose-1-phosphate dehydratase (232 aa).

Residue Cys91 participates in substrate binding. The Zn(2+) site is built by His109, His111, and His191.

Belongs to the aldolase class II family. MtnB subfamily. It depends on Zn(2+) as a cofactor.

It is found in the cytoplasm. The catalysed reaction is 5-(methylsulfanyl)-D-ribulose 1-phosphate = 5-methylsulfanyl-2,3-dioxopentyl phosphate + H2O. Its pathway is amino-acid biosynthesis; L-methionine biosynthesis via salvage pathway; L-methionine from S-methyl-5-thio-alpha-D-ribose 1-phosphate: step 2/6. Its function is as follows. Catalyzes the dehydration of methylthioribulose-1-phosphate (MTRu-1-P) into 2,3-diketo-5-methylthiopentyl-1-phosphate (DK-MTP-1-P). This is Methylthioribulose-1-phosphate dehydratase from Schizosaccharomyces japonicus (strain yFS275 / FY16936) (Fission yeast).